The following is an 865-amino-acid chain: Lactose regulatory protein LAC9 (865 aa).

The segment covering 1 to 15 has biased composition (polar residues); it reads MGSRASNSPSFSSKA. Positions 1–87 are disordered; the sequence is MGSRASNSPS…NNNNNNNKKS (87 aa). Over residues 22 to 34 the composition is skewed to basic and acidic residues; the sequence is EYKKNAVKKETIR. The segment covering 67-85 has biased composition (low complexity); that stretch reads SNGNKNDSNANNNNNNNNK. Zn(2+) is bound by residues Cys95, Cys98, Cys105, Cys112, Cys115, and Cys122. Positions 95-122 form a DNA-binding region, zn(2)-C6 fungal-type; the sequence is CDACRKKKWKCSKTVPTCTNCLKYNLDC. The segment at 818-840 is disordered; the sequence is LQSSTTQMRPPTTSGWPDTNNFL.

The protein resides in the nucleus. Positive regulatory protein, that controls induction of the lactose-galactose regulation of Kluyveromyces lactis. The protein is Lactose regulatory protein LAC9 (LAC9) of Kluyveromyces lactis (strain ATCC 8585 / CBS 2359 / DSM 70799 / NBRC 1267 / NRRL Y-1140 / WM37) (Yeast).